A 136-amino-acid chain; its full sequence is Small ribosomal subunit protein uS19 (136 aa).

Belongs to the universal ribosomal protein uS19 family.

Its function is as follows. Protein S19 forms a complex with S13 that binds strongly to the 16S ribosomal RNA. The polypeptide is Small ribosomal subunit protein uS19 (Methanosphaera stadtmanae (strain ATCC 43021 / DSM 3091 / JCM 11832 / MCB-3)).